Reading from the N-terminus, the 446-residue chain is Tubulin beta-4 chain (446 aa).

Residues Gln11, Glu69, Ser138, Gly142, Thr143, Gly144, Asn204, and Asn226 each contribute to the GTP site. Glu69 provides a ligand contact to Mg(2+). Polar residues predominate over residues 417-426 (DLVSEYQQYQ). The interval 417-446 (DLVSEYQQYQDATADEEGDYEDEDEALHDE) is disordered. Over residues 429–446 (TADEEGDYEDEDEALHDE) the composition is skewed to acidic residues.

It belongs to the tubulin family. Dimer of alpha and beta chains. A typical microtubule is a hollow water-filled tube with an outer diameter of 25 nm and an inner diameter of 15 nM. Alpha-beta heterodimers associate head-to-tail to form protofilaments running lengthwise along the microtubule wall with the beta-tubulin subunit facing the microtubule plus end conferring a structural polarity. Microtubules usually have 13 protofilaments but different protofilament numbers can be found in some organisms and specialized cells. Mg(2+) serves as cofactor.

The protein resides in the cytoplasm. It localises to the cytoskeleton. Tubulin is the major constituent of microtubules, a cylinder consisting of laterally associated linear protofilaments composed of alpha- and beta-tubulin heterodimers. Microtubules grow by the addition of GTP-tubulin dimers to the microtubule end, where a stabilizing cap forms. Below the cap, tubulin dimers are in GDP-bound state, owing to GTPase activity of alpha-tubulin. The protein is Tubulin beta-4 chain (TUBB4) of Eleusine indica (Goosegrass).